The chain runs to 682 residues: RNA helicase NPH-II (682 aa).

The 174-residue stretch at 181–354 (FELLRKRKQI…EFLPDVEFYH (174 aa)) folds into the Helicase ATP-binding domain. 194-201 (GSTGIGKT) is an ATP binding site. The short motif at 303–306 (DEIH) is the DEXH box element. A Helicase C-terminal domain is found at 386–551 (NISTTLNWCR…KFKLSLPNDL (166 aa)).

This sequence belongs to the DEAD box helicase family. DEAH subfamily. Monomer.

The protein resides in the virion. The enzyme catalyses ATP + H2O = ADP + phosphate + H(+). Functionally, NTP-dependent helicase that catalyzes unidirectional unwinding of 3'tailed duplex RNAs and plays an important role during transcription of early mRNAs, presumably by preventing R-loop formation behind the elongating RNA polymerase. Might also play a role in the export of newly synthesized mRNA chains out of the core into the cytoplasm. Required for replication and propagation of viral particles. The polypeptide is RNA helicase NPH-II (NPH2) (Vertebrata (FPV)).